We begin with the raw amino-acid sequence, 208 residues long: MKVVAFERSVQGTGASRRLRNSGKTPAIIYGAGAEPKLIELDHNALYHALKKEAFHSSILDIEVAGKVEKALLRDFQLHPFKQLVLHVDFQRVSAKEKIHVKVPLHFLNQETAPGVKLGHGIVNHILNDVEVSCLPADLPEFIEVDLGTLEIGQTLHIADLKLPKGVTILTHGGDENPAVANISVPAGEKSAAAEEGAAAAGEDKPAA.

A compositionally biased stretch (low complexity) spans 186–201 (PAGEKSAAAEEGAAAA). The segment at 186 to 208 (PAGEKSAAAEEGAAAAGEDKPAA) is disordered.

This sequence belongs to the bacterial ribosomal protein bL25 family. CTC subfamily. As to quaternary structure, part of the 50S ribosomal subunit; part of the 5S rRNA/L5/L18/L25 subcomplex. Contacts the 5S rRNA. Binds to the 5S rRNA independently of L5 and L18.

In terms of biological role, this is one of the proteins that binds to the 5S RNA in the ribosome where it forms part of the central protuberance. The polypeptide is Large ribosomal subunit protein bL25 (Ralstonia pickettii (strain 12J)).